The sequence spans 150 residues: Bcl-2-interacting killer (150 aa).

A BH3 motif is present at residues 51–65; it reads VALRLACIGDEMDLC. A helical transmembrane segment spans residues 127–147; that stretch reads PGQLFPMVLLVFLLLGGAWYL. Residues 127–148 are leucine-zipper; it reads PGQLFPMVLLVFLLLGGAWYLQ.

Interacts with RHBDL4/RHBDD1. Interacts with BCL2L10/BCL-B. In terms of processing, proteolytically cleaved by RHBDL4/RHBDD1. RHBDL4/RHBDD1-induced cleavage is a necessary step prior its degradation by the proteosome-dependent mechanism. Ubiquitinated by the ECS(ASB11) complex in response to endoplasmic reticulum stress, leading to substrate recognition by the segregase p97/VCP and degradation by the proteasome. Expressed in testis, kidney, liver, lung and heart.

The protein localises to the endomembrane system. Its subcellular location is the mitochondrion membrane. Its function is as follows. Accelerates programmed cell death. Binding to the apoptosis repressors Bcl-X(L), BHRF1 or Bcl-2 suppresses this death-promoting activity. This is Bcl-2-interacting killer (Bik) from Mus musculus (Mouse).